An 893-amino-acid chain; its full sequence is Serine/threonine-protein kinase PLK4 (893 aa).

Residues 12-265 enclose the Protein kinase domain; that stretch reads FRVGNLLGKG…LSSVLDHPFM (254 aa). ATP-binding positions include 18-26 and Lys41; that span reads LGKGSFAGV. Lys45 and Lys46 each carry N6-acetyllysine. Asp136 acts as the Proton acceptor in catalysis. Residues 349-358 show a composition bias toward polar residues; it reads NQEQETSNSG. The tract at residues 349–393 is disordered; it reads NQEQETSNSGRGRVIQEAEERPHSRYLRRAHSSDRSETSHGQSRV. Residues 362–371 are compositionally biased toward basic and acidic residues; it reads VIQEAEERPH. Phosphoserine occurs at positions 403 and 588. The Cryptic POLO box 1 (CPB1) domain maps to 509–622; sequence TLRSITSPLT…SRFVQLVRSK (114 aa). Residues 623 to 736 enclose the Cryptic POLO box 2 (CPB2) domain; the sequence is SPKITYFTRY…GRRPSSTSSP (114 aa). The disordered stretch occupies residues 730–749; that stretch reads PSSTSSPKALTPPPPVDPNY. Residues 809-887 form the POLO box domain; that stretch reads QLLKSVFVKN…LSSILLMFSN (79 aa).

The protein belongs to the protein kinase superfamily. Ser/Thr protein kinase family. CDC5/Polo subfamily. As to quaternary structure, homodimer. Interacts with CEP152 (via N-terminus). Interacts with CEP78; this interaction may be important for proper PLK4 localization to the centriole and PLK4-induced overduplication of centrioles. Interacts with CEP131. Interacts simultaneously with TENT5C and CEP192. Interacts with TENT5C; this interaction leads to the TENT5C recruitment in the centrosome. Interacts with CEP85; this interaction may be important in cell migration and centriole assembly. Ubiquitinated; leading to its degradation by the proteasome. In terms of processing, tyrosine-phosphorylated by TEC. Post-translationally, acetylation by KAT2A and KAT2B impairs kinase activity by shifting the kinase to an inactive conformation.

The protein resides in the cytoplasm. The protein localises to the cytoskeleton. It localises to the microtubule organizing center. Its subcellular location is the centrosome. It is found in the centriole. The protein resides in the nucleus. The protein localises to the nucleolus. It localises to the cleavage furrow. The catalysed reaction is L-seryl-[protein] + ATP = O-phospho-L-seryl-[protein] + ADP + H(+). It catalyses the reaction L-threonyl-[protein] + ATP = O-phospho-L-threonyl-[protein] + ADP + H(+). In terms of biological role, serine/threonine-protein kinase that plays a central role in centriole duplication. Able to trigger procentriole formation on the surface of the parental centriole cylinder, leading to the recruitment of centriole biogenesis proteins such as SASS6, CPAP, CCP110, CEP135 and gamma-tubulin. When overexpressed, it is able to induce centrosome amplification through the simultaneous generation of multiple procentrioles adjoining each parental centriole during S phase. Phosphorylates 'Ser-151' of FBXW5 during the G1/S transition, leading to inhibit FBXW5 ability to ubiquitinate SASS6. Its central role in centriole replication suggests a possible role in tumorigenesis, centrosome aberrations being frequently observed in tumors. Also involved in deuterosome-mediated centriole amplification in multiciliated that can generate more than 100 centrioles. Also involved in trophoblast differentiation by phosphorylating HAND1, leading to disrupt the interaction between HAND1 and MDFIC and activate HAND1. Phosphorylates CDC25C and CHEK2. Required for the recruitment of STIL to the centriole and for STIL-mediated centriole amplification. Phosphorylates CEP131 and PCM1 which is essential for proper organization and integrity of centriolar satellites. The polypeptide is Serine/threonine-protein kinase PLK4 (Bos taurus (Bovine)).